Reading from the N-terminus, the 84-residue chain is Beta-toxin Ct16 (84 aa).

Residues 1 to 19 form the signal peptide; sequence MNYFILLFVATFLLLDVNC. Residues 21–80 enclose the LCN-type CS-alpha/beta domain; that stretch reads KDGYPVDANNCKFECWKNEYCDELCKAKRAESGYCYKLKLSCWCEGLPDDEPTKTSDRCY. Disulfide bonds link C31/C79, C35/C55, C41/C62, and C45/C64. Residue T82 is modified to Threonine amide.

The protein belongs to the long (4 C-C) scorpion toxin superfamily. Sodium channel inhibitor family. Alpha subfamily. Expressed by the venom gland.

The protein localises to the secreted. Alpha toxins bind voltage-independently at site-3 of sodium channels (Nav) and inhibit the inactivation of the activated channels, thereby blocking neuronal transmission. Is possibly toxic to mice. The protein is Beta-toxin Ct16 of Centruroides tecomanus (Scorpion).